A 132-amino-acid polypeptide reads, in one-letter code: Translation initiation factor 5A (132 aa).

Position 36 is a hypusine (K36).

It belongs to the eIF-5A family.

It is found in the cytoplasm. Its function is as follows. Functions by promoting the formation of the first peptide bond. The sequence is that of Translation initiation factor 5A (eIF5A) from Pyrobaculum neutrophilum (strain DSM 2338 / JCM 9278 / NBRC 100436 / V24Sta) (Thermoproteus neutrophilus).